A 496-amino-acid chain; its full sequence is RNA-binding motif protein, Y chromosome, family 1 member A1 (496 aa).

An RRM domain is found at 8 to 85; that stretch reads GKLFIGGLNR…KAIKVEQAKK (78 aa). Disordered stretches follow at residues 78 to 349 and 452 to 496; these read IKVE…HRDY and KDQR…SSRY. 2 stretches are compositionally biased toward low complexity: residues 97–114 and 149–159; these read PASS…SARG and PVKRGPSSRSG. Polar residues predominate over residues 175-184; it reads NSWMGSQGPM. Basic and acidic residues-rich tracts occupy residues 204–214, 242–253, 276–289, 313–326, 335–349, and 484–496; these read RNDRMSTRHDG, DNGHSNRDEHSS, AYRD…DESY, GYRD…HESY, SSRE…HRDY, and GESR…SSRY.

As to quaternary structure, interacts with splicing factor proteins SFRS3/SRP20, TRA2B/SFRS10, KHDRBS1/SAM68 and KHDRBS3. In terms of tissue distribution, testis-specific.

The protein localises to the nucleus. RNA-binding protein involved in pre-mRNA splicing. Required for sperm development. Acts additively with TRA2B to promote exon 7 inclusion of the survival motor neuron SMN. Binds non-specifically to mRNAs. The polypeptide is RNA-binding motif protein, Y chromosome, family 1 member A1 (RBMY1A1) (Homo sapiens (Human)).